Here is a 669-residue protein sequence, read N- to C-terminus: MSNPQKALNDFLSSESVHTHDSSRKQSNKQSSDEGRSSSQPSHHHSGGTNNNNNNNNNNNNSNNNNNGNDGGNDDDYDYEMQDYRPSPQSARPTPTYVPQYSVESGTAFPIQEVIPSAYINTQDINHKDNGPPSASSNRAFRPRGQTTVSANVLNIEDFYKNADDAHTIPESHLSRRRSRSRATSNAGHSANTGATNGRTTGAQTNMESNESPRNVPIMVKPKTLYQNPQTPTVLPSTYHPINKWSSVKNTYLKEFLAEFMGTMVMIIFGSAVVCQVNVAGKIQQDNFNVALDNLNVTGSSAETIDAMKSLTSLVSSVAGGTFDDVALGWAAAVVMGYFCAGGSAISGAHLNPSITLANLVYRGFPLKKVPYYFAGQLIGAFTGALILFIWYKRVLQEAYSDWWMNESVAGMFCVFPKPYLSSGRQFFSEFLCGAMLQAGTFALTDPYTCLSSDVFPLMMFILIFIINASMAYQTGTAMNLARDLGPRLALYAVGFDHKMLWVHHHHFFWVPMVGPFIGALMGGLVYDVCIYQGHESPVNWSLPVYKEMIMRAWFRRPGWKKRNRARRTSDLSDFSYNNDDDEEFGERMALQKTKTKSSISDNENEAGEKKVQFKSVQRGKRTFGGIPTILEEEDSIETASLGATTTDSIGLSDTSSEDSHYGNAKKVT.

Residues 1–16 show a composition bias toward polar residues; it reads MSNPQKALNDFLSSES. Disordered stretches follow at residues 1 to 99 and 123 to 147; these read MSNP…TYVP and QDIN…RGQT. At 1 to 254 the chain is on the extracellular side; it reads MSNPQKALND…WSSVKNTYLK (254 aa). Positions 50-68 are enriched in low complexity; the sequence is NNNNNNNNNNNNSNNNNNG. Residues 72–81 are compositionally biased toward acidic residues; sequence GNDDDYDYEM. Composition is skewed to polar residues over residues 87–99 and 133–147; these read SPQS…TYVP and PSAS…RGQT. The residue at position 150 (Ser150) is a Phosphoserine. The disordered stretch occupies residues 167–215; the sequence is HTIPESHLSRRRSRSRATSNAGHSANTGATNGRTTGAQTNMESNESPRN. The residue at position 168 (Thr168) is a Phosphothreonine. Positions 191 to 206 are enriched in low complexity; that stretch reads ANTGATNGRTTGAQTN. 2 positions are modified to phosphoserine: Ser209 and Ser212. The helical transmembrane segment at 255-275 threads the bilayer; it reads EFLAEFMGTMVMIIFGSAVVC. Over 276-325 the chain is Cytoplasmic; that stretch reads QVNVAGKIQQDNFNVALDNLNVTGSSAETIDAMKSLTSLVSSVAGGTFDD. Residues 326 to 346 form a helical membrane-spanning segment; sequence VALGWAAAVVMGYFCAGGSAI. Topologically, residues 347–369 are extracellular; the sequence is SGAHLNPSITLANLVYRGFPLKK. Positions 352 to 354 match the NPA 1 motif; the sequence is NPS. Residues 370–390 form a helical membrane-spanning segment; sequence VPYYFAGQLIGAFTGALILFI. At 391–446 the chain is on the cytoplasmic side; sequence WYKRVLQEAYSDWWMNESVAGMFCVFPKPYLSSGRQFFSEFLCGAMLQAGTFALTD. Residues 447 to 467 traverse the membrane as a helical segment; it reads PYTCLSSDVFPLMMFILIFII. The Extracellular portion of the chain corresponds to 468–506; it reads NASMAYQTGTAMNLARDLGPRLALYAVGFDHKMLWVHHH. Positions 480 to 482 match the NPA 2 motif; it reads NLA. The chain crosses the membrane as a helical span at residues 507–527; it reads HFFWVPMVGPFIGALMGGLVY. Topologically, residues 528-669 are cytoplasmic; it reads DVCIYQGHES…SHYGNAKKVT (142 aa). Disordered regions lie at residues 591–615 and 635–669; these read LQKT…VQFK and DSIE…KKVT. Residues 638–655 are compositionally biased toward polar residues; the sequence is ETASLGATTTDSIGLSDT.

This sequence belongs to the MIP/aquaporin (TC 1.A.8) family.

The protein resides in the membrane. Channel protein for glycerol. Has a role in both glycerol influx and efflux. Plays a role in osmoregulation: under osmotic stress the channel is apparently closed to allow accumulation of glycerol in the cell under hyperosmotic conditions. The polypeptide is Glycerol uptake/efflux facilitator protein (FPS1) (Saccharomyces cerevisiae (strain ATCC 204508 / S288c) (Baker's yeast)).